Consider the following 163-residue polypeptide: Endoribonuclease YbeY (163 aa).

The Zn(2+) site is built by His119, His123, and His129.

The protein belongs to the endoribonuclease YbeY family. The cofactor is Zn(2+).

Its subcellular location is the cytoplasm. Functionally, single strand-specific metallo-endoribonuclease involved in late-stage 70S ribosome quality control and in maturation of the 3' terminus of the 16S rRNA. In Actinobacillus pleuropneumoniae serotype 5b (strain L20), this protein is Endoribonuclease YbeY.